The chain runs to 755 residues: Protein MTSS 1 (755 aa).

An IMD domain is found at 1-250 (MEAVIEKECS…EQVILDLKGS (250 aa)). The stretch at 108–155 (LQEQMEEWKKVANQLDKDHAKEYKKARQEIKKKSSDTLKLQKKAKKGR) forms a coiled coil. 2 disordered regions span residues 139-159 (KKSSDTLKLQKKAKKGRGDIQ) and 255-305 (SYQT…RSSN). Position 258 is a phosphothreonine (Thr258). Ser261, Ser262, Ser271, and Ser322 each carry phosphoserine. The tract at residues 327-351 (QDAFQSKSPSPMPPEAPNQLSNGFS) is disordered. At Thr425 the chain carries Phosphothreonine. Disordered regions lie at residues 428–470 (RRKE…TRPG), 490–513 (DTQRSSRDSLQCSSGYSTQTTTPC), and 563–755 (QAKR…PRFS). Residues 443-453 (TTASGPPAAAE) are compositionally biased toward low complexity. Phosphothreonine is present on Thr603. The segment covering 608-623 (PIPIKTPVIPVKTPTV) has biased composition (low complexity). Residues Ser644 and Ser647 each carry the phosphoserine modification. A compositionally biased stretch (polar residues) spans 656–671 (GVTSMPSSMWSGQASV). Positions 727-744 (QGEDMLNAIRRGVKLKKT) constitute a WH2 domain.

Belongs to the MTSS family. Binds to actin. Binds to the cytoplasmic domain of receptor protein tyrosine phosphatase delta. Expressed in many tissues, including spleen, thymus, prostate, testis, uterus, colon, and peripheral blood.

Its subcellular location is the cytoplasm. It localises to the cytoskeleton. Functionally, may be related to cancer progression or tumor metastasis in a variety of organ sites, most likely through an interaction with the actin cytoskeleton. The polypeptide is Protein MTSS 1 (Homo sapiens (Human)).